Reading from the N-terminus, the 305-residue chain is Heme A synthase (305 aa).

The Cytoplasmic portion of the chain corresponds to 1–6 (MKKFLK). Residues 7–27 (VWSVLTIICMTVVVFGGALVT) form a helical membrane-spanning segment. Over 28–63 (KTGSADGCGNSWPLCNGQLVRLTDVTPEKLIEFMHR) the chain is Extracellular. A disulfide bridge links cysteine 35 with cysteine 42. The active site involves glutamate 59. Heme o is bound at residue histidine 62. A helical membrane pass occupies residues 64-84 (MTTGISSIFVIVLAICAWIYM). At 85–92 (KNRRETKP) the chain is on the cytoplasmic side. The chain crosses the membrane as a helical span at residues 93–113 (LAIIAVLFLIIQALMGMAAVV). Residues 114–122 (WGQNPYIMA) are Extracellular-facing. A helical transmembrane segment spans residues 123 to 143 (LHFGISIICYASIVLLALMIF). Residue histidine 124 participates in heme o binding. Over 144–160 (EVDRKFDARNLVMGTKL) the chain is Cytoplasmic. The chain crosses the membrane as a helical span at residues 161–181 (RINIYALTIYTYLAVYTGALV). Over 182-212 (RHEKASMAVPVWPFENGHFIMPTSVQDYVQY) the chain is Extracellular. Residues 213-233 (FHRLAAFILIVWLLYVTWLVF) traverse the membrane as a helical segment. Heme b is bound at residue histidine 214. Over 234–240 (RDYRRYR) the chain is Cytoplasmic. Residues 241-261 (VLTFSMVLSLVFIALQAVTGA) form a helical membrane-spanning segment. Over 262-271 (LSVYTGVNLY) the chain is Extracellular. Residues 272 to 292 (IALAHSLIITMLFALLCYLCL) traverse the membrane as a helical segment. Residue histidine 276 participates in heme b binding. The Cytoplasmic segment spans residues 293–305 (LASRSKSNRLRIK).

This sequence belongs to the COX15/CtaA family. Type 1 subfamily. In terms of assembly, interacts with CtaB. Heme b serves as cofactor.

The protein localises to the cell membrane. The enzyme catalyses Fe(II)-heme o + 2 A + H2O = Fe(II)-heme a + 2 AH2. Its pathway is porphyrin-containing compound metabolism; heme A biosynthesis; heme A from heme O: step 1/1. Its function is as follows. Catalyzes the conversion of heme O to heme A by two successive hydroxylations of the methyl group at C8. The first hydroxylation forms heme I, the second hydroxylation results in an unstable dihydroxymethyl group, which spontaneously dehydrates, resulting in the formyl group of heme A. The polypeptide is Heme A synthase (Listeria monocytogenes serotype 4b (strain F2365)).